The primary structure comprises 606 residues: Polypeptide N-acetylgalactosaminyltransferase 9 (606 aa).

Residues 1–6 (MAVARK) lie on the Cytoplasmic side of the membrane. A helical; Signal-anchor for type II membrane protein transmembrane segment spans residues 7 to 29 (IRTLLTVNILVFVGIVLFSVYCR). The Lumenal segment spans residues 30–606 (LQGRSQELVR…IRNWIKHARH (577 aa)). Residues 43–62 (GGCRPRPATPAPGSPLRSGG) are disordered. 2 disulfide bridges follow: C144–C375 and C366–C445. Residues 153–264 (LPQVSVVFIF…TGWAEPALSR (112 aa)) form a catalytic subdomain A region. Substrate is bound by residues D194 and R225. The Mn(2+) site is built by D248, H250, and H380. The catalytic subdomain B stretch occupies residues 321–383 (PIRTPAMIGC…PCSRVAHIER (63 aa)). R383 and Y388 together coordinate substrate. The N-linked (GlcNAc...) asparagine glycan is linked to N463. Residues 467 to 603 (TYGEVRNSKA…KWMIRNWIKH (137 aa)) form the Ricin B-type lectin domain. 3 disulfide bridges follow: C480-C496, C528-C543, and C570-C590.

The protein belongs to the glycosyltransferase 2 family. GalNAc-T subfamily. Requires Mn(2+) as cofactor.

The protein localises to the golgi apparatus membrane. The enzyme catalyses L-seryl-[protein] + UDP-N-acetyl-alpha-D-galactosamine = a 3-O-[N-acetyl-alpha-D-galactosaminyl]-L-seryl-[protein] + UDP + H(+). It carries out the reaction L-threonyl-[protein] + UDP-N-acetyl-alpha-D-galactosamine = a 3-O-[N-acetyl-alpha-D-galactosaminyl]-L-threonyl-[protein] + UDP + H(+). It participates in protein modification; protein glycosylation. Catalyzes the initial reaction in O-linked oligosaccharide biosynthesis, the transfer of an N-acetyl-D-galactosamine residue to a serine or threonine residue on the protein receptor. Does not glycosylate apomucin or SDC3. This Macaca fascicularis (Crab-eating macaque) protein is Polypeptide N-acetylgalactosaminyltransferase 9 (GALNT9).